A 220-amino-acid polypeptide reads, in one-letter code: ATP phosphoribosyltransferase (220 aa).

Belongs to the ATP phosphoribosyltransferase family. Short subfamily. In terms of assembly, heteromultimer composed of HisG and HisZ subunits.

The protein resides in the cytoplasm. It catalyses the reaction 1-(5-phospho-beta-D-ribosyl)-ATP + diphosphate = 5-phospho-alpha-D-ribose 1-diphosphate + ATP. The protein operates within amino-acid biosynthesis; L-histidine biosynthesis; L-histidine from 5-phospho-alpha-D-ribose 1-diphosphate: step 1/9. Functionally, catalyzes the condensation of ATP and 5-phosphoribose 1-diphosphate to form N'-(5'-phosphoribosyl)-ATP (PR-ATP). Has a crucial role in the pathway because the rate of histidine biosynthesis seems to be controlled primarily by regulation of HisG enzymatic activity. The chain is ATP phosphoribosyltransferase from Janthinobacterium sp. (strain Marseille) (Minibacterium massiliensis).